We begin with the raw amino-acid sequence, 355 residues long: cAMP-dependent protein kinase catalytic subunit PRKX (355 aa).

N-acetylmethionine is present on Met-1. The segment at 1-42 (MEPPAGAAATVKDPDHDPVKTKVSAPAADPKPRTSSQKAGHS) is disordered. Residues 46-300 (WDTIATVGTG…AEDIKRHRWF (255 aa)) enclose the Protein kinase domain. ATP is bound by residues 52–60 (VGTGTFGRV) and Lys-75. Residue Asp-169 is the Proton acceptor of the active site. At Thr-200 the chain carries Phosphothreonine. Residues 301–355 (RGVEWESVPQRKLKPPIVPKLSGDGDISNFETYPESELDKTPSVSDKDLETFKNF) enclose the AGC-kinase C-terminal domain. Residues 316–355 (PIVPKLSGDGDISNFETYPESELDKTPSVSDKDLETFKNF) form a disordered region. Over residues 337–355 (ELDKTPSVSDKDLETFKNF) the composition is skewed to basic and acidic residues.

This sequence belongs to the protein kinase superfamily. AGC Ser/Thr protein kinase family. cAMP subfamily. Like other cAMP-dependent protein kinases, the inactive holoenzyme is probably composed of 2 PRKX catalytic subunits and a dimer of regulatory subunits. Interacts (cAMP-dependent) specifically with the regulatory subunits PRKAR1A and PRKAR1B. Compared to other cAMP-dependent serine/threonine protein kinases, does not interact with the 2 other PKA regulatory subunits PRKAR2A and PRKAR2B. Interacts with PIN1 (via WW domain). Interacts with cAMP-dependent protein kinase inhibitor/PKI proteins; inhibits PRKX. Interacts with GPKOW. Interacts with SMAD6. Interacts with PKD1; involved in differentiation and controlled morphogenesis of the kidney. Phosphorylated; autophosphorylates in vitro. In terms of tissue distribution, widely expressed.

It localises to the cytoplasm. The protein resides in the nucleus. It catalyses the reaction L-seryl-[protein] + ATP = O-phospho-L-seryl-[protein] + ADP + H(+). The enzyme catalyses L-threonyl-[protein] + ATP = O-phospho-L-threonyl-[protein] + ADP + H(+). Its activity is regulated as follows. Binding of cAMP to the PRKAR1A or PRKAR1B regulatory subunits induces dissociation of the holoenzyme heterotetramer. The released monomeric PRKX is then active and able to phosphorylate its substrates. In terms of biological role, serine/threonine protein kinase regulated by and mediating cAMP signaling in cells. Acts through phosphorylation of downstream targets that may include CREB, SMAD6 and PKD1 and has multiple functions in cellular differentiation and epithelial morphogenesis. Regulates myeloid cell differentiation through SMAD6 phosphorylation. Involved in nephrogenesis by stimulating renal epithelial cell migration and tubulogenesis. Also involved in angiogenesis through stimulation of endothelial cell proliferation, migration and vascular-like structure formation. This is cAMP-dependent protein kinase catalytic subunit PRKX (Prkx) from Mus musculus (Mouse).